The sequence spans 468 residues: Chromosomal replication initiator protein DnaA (468 aa).

The interval 1–84 (MSSSLWLQCL…RFEVGSRPVA (84 aa)) is domain I, interacts with DnaA modulators. The disordered stretch occupies residues 81–104 (RPVAAPKPAPTRTPADVAAESSAP). The domain II stretch occupies residues 84–131 (AAPKPAPTRTPADVAAESSAPAQLQARKPVHKTWDDDAQAIADINHRS). Residues 132-348 (NVNPKHKFNN…GALNRVIANA (217 aa)) are domain III, AAA+ region. Residues Gly176, Gly178, Lys179, and Thr180 each coordinate ATP. A domain IV, binds dsDNA region spans residues 349–468 (NFTGRPITID…YSNLIRTLSS (120 aa)).

The protein belongs to the DnaA family. Oligomerizes as a right-handed, spiral filament on DNA at oriC.

It localises to the cytoplasm. Functionally, plays an essential role in the initiation and regulation of chromosomal replication. ATP-DnaA binds to the origin of replication (oriC) to initiate formation of the DNA replication initiation complex once per cell cycle. Binds the DnaA box (a 9 base pair repeat at the origin) and separates the double-stranded (ds)DNA. Forms a right-handed helical filament on oriC DNA; dsDNA binds to the exterior of the filament while single-stranded (ss)DNA is stabiized in the filament's interior. The ATP-DnaA-oriC complex binds and stabilizes one strand of the AT-rich DNA unwinding element (DUE), permitting loading of DNA polymerase. After initiation quickly degrades to an ADP-DnaA complex that is not apt for DNA replication. Binds acidic phospholipids. This chain is Chromosomal replication initiator protein DnaA, found in Vibrio campbellii (strain ATCC BAA-1116).